Consider the following 196-residue polypeptide: Elongation factor Ts (196 aa).

Positions 80–83 (TDFV) are involved in Mg(2+) ion dislocation from EF-Tu.

It belongs to the EF-Ts family.

The protein localises to the cytoplasm. Associates with the EF-Tu.GDP complex and induces the exchange of GDP to GTP. It remains bound to the aminoacyl-tRNA.EF-Tu.GTP complex up to the GTP hydrolysis stage on the ribosome. The polypeptide is Elongation factor Ts (Desulfotalea psychrophila (strain LSv54 / DSM 12343)).